A 296-amino-acid polypeptide reads, in one-letter code: Ribose import binding protein RbsB (296 aa).

The signal sequence occupies residues 1–25 (MNMKKLATLVSAVALSATVSANAMA).

The protein belongs to the bacterial solute-binding protein 2 family. The complex is composed of an ATP-binding protein (RbsA), two transmembrane proteins (RbsC) and a solute-binding protein (RbsB).

The protein localises to the periplasm. In terms of biological role, part of the ABC transporter complex RbsABC involved in ribose import. Binds ribose. Also serves as the primary chemoreceptor for chemotaxis. This is Ribose import binding protein RbsB from Escherichia coli (strain K12).